The chain runs to 470 residues: Poly(A) polymerase catalytic subunit (470 aa).

Catalysis depends on residues aspartate 192 and aspartate 194.

Belongs to the poxviridae poly(A) polymerase catalytic subunit family. In terms of assembly, heterodimer of a large (catalytic) subunit and a small (regulatory) subunit.

The catalysed reaction is RNA(n) + ATP = RNA(n)-3'-adenine ribonucleotide + diphosphate. Polymerase that creates the 3'-poly(A) tail of mRNA's. The chain is Poly(A) polymerase catalytic subunit (PAPL) from Myxoma virus (strain Lausanne) (MYXV).